A 167-amino-acid chain; its full sequence is Transmembrane protein 220 (167 aa).

Helical transmembrane passes span 10–30, 40–60, 69–89, 104–122, and 130–150; these read PGLW…AAVV, WVVV…NPLV, VSAI…YHFL, ELSG…HSSS, and MHLA…VYVH.

The protein resides in the membrane. In Mus musculus (Mouse), this protein is Transmembrane protein 220 (Tmem220).